A 273-amino-acid polypeptide reads, in one-letter code: 4-hydroxy-tetrahydrodipicolinate reductase (273 aa).

Residues 11–16 (GAGGRM) and E36 contribute to the NAD(+) site. Position 37 (R37) interacts with NADP(+). Residues 100–102 (GTT) and 124–127 (AANY) contribute to the NAD(+) site. H157 serves as the catalytic Proton donor/acceptor. H158 contacts (S)-2,3,4,5-tetrahydrodipicolinate. The active-site Proton donor is K161. 167–168 (GT) is a binding site for (S)-2,3,4,5-tetrahydrodipicolinate.

Belongs to the DapB family.

The protein localises to the cytoplasm. It catalyses the reaction (S)-2,3,4,5-tetrahydrodipicolinate + NAD(+) + H2O = (2S,4S)-4-hydroxy-2,3,4,5-tetrahydrodipicolinate + NADH + H(+). It carries out the reaction (S)-2,3,4,5-tetrahydrodipicolinate + NADP(+) + H2O = (2S,4S)-4-hydroxy-2,3,4,5-tetrahydrodipicolinate + NADPH + H(+). Its pathway is amino-acid biosynthesis; L-lysine biosynthesis via DAP pathway; (S)-tetrahydrodipicolinate from L-aspartate: step 4/4. Catalyzes the conversion of 4-hydroxy-tetrahydrodipicolinate (HTPA) to tetrahydrodipicolinate. The polypeptide is 4-hydroxy-tetrahydrodipicolinate reductase (Acinetobacter baumannii (strain ACICU)).